Consider the following 208-residue polypeptide: Sodium/potassium-transporting ATPase subunit beta-1-interacting protein 2 (208 aa).

The next 4 helical transmembrane spans lie at 1 to 23, 35 to 55, 64 to 84, and 148 to 168; these read MGYCSGRCTLIFICGMQLVCVLE, APILANFVHIIIVILGLFGTI, GYAVWLVLWVTWNVFVICFYL, and VAHSSLQIVLALAGFIYACYV.

The protein belongs to the NKAIN family. Interacts with ATP1B1. In terms of tissue distribution, detected in the brain only and specifically in neurons; expressed in multiple regions such as cerebral cortex, thalamus, cerebellum, olfactory bulb and brainstem, but not in the hippocampus.

It is found in the cell membrane. The chain is Sodium/potassium-transporting ATPase subunit beta-1-interacting protein 2 (Nkain2) from Mus musculus (Mouse).